The chain runs to 85 residues: Large ribosomal subunit protein eL43 (85 aa).

The segment at 38–59 (CPVCGRKAVRRISTGIWQCQKC) adopts a C4-type zinc-finger fold.

Belongs to the eukaryotic ribosomal protein eL43 family. The cofactor is Zn(2+).

In Thermococcus sibiricus (strain DSM 12597 / MM 739), this protein is Large ribosomal subunit protein eL43.